The primary structure comprises 144 residues: Maximins 3/H11 type 1 (144 aa).

The signal sequence occupies residues Met-1–Ala-18. Propeptides lie at residues Arg-19–Arg-43 and Arg-73–Lys-122. Isoleucine amide is present on Ile-143.

It belongs to the bombinin family. Expressed by the skin glands.

The protein localises to the secreted. Maximin-3 shows antibacterial activity against both Gram-positive and Gram-negative bacteria. It also shows antimicrobial activity against the fungus C.albicans, but not against A.flavus nor P.uticale. It has little hemolytic activity. It possess a significant cytotoxicity against tumor cell lines. It possess a significant anti-HIV activity. It shows high spermicidal activity. In terms of biological role, maximin-H11 shows antimicrobial activity against bacteria and against the fungus C.albicans. Shows strong hemolytic activity. The chain is Maximins 3/H11 type 1 from Bombina maxima (Giant fire-bellied toad).